The chain runs to 367 residues: Chorismate synthase (367 aa).

Position 48 (arginine 48) interacts with NADP(+). FMN is bound by residues 125 to 127 (RSS), glycine 283, 298 to 302 (KPTPS), and arginine 324.

Belongs to the chorismate synthase family. As to quaternary structure, homotetramer. It depends on FMNH2 as a cofactor.

It catalyses the reaction 5-O-(1-carboxyvinyl)-3-phosphoshikimate = chorismate + phosphate. Its pathway is metabolic intermediate biosynthesis; chorismate biosynthesis; chorismate from D-erythrose 4-phosphate and phosphoenolpyruvate: step 7/7. Its function is as follows. Catalyzes the anti-1,4-elimination of the C-3 phosphate and the C-6 proR hydrogen from 5-enolpyruvylshikimate-3-phosphate (EPSP) to yield chorismate, which is the branch point compound that serves as the starting substrate for the three terminal pathways of aromatic amino acid biosynthesis. This reaction introduces a second double bond into the aromatic ring system. The protein is Chorismate synthase of Agathobacter rectalis (strain ATCC 33656 / DSM 3377 / JCM 17463 / KCTC 5835 / VPI 0990) (Eubacterium rectale).